Here is a 147-residue protein sequence, read N- to C-terminus: Hemoglobin subunit gamma (147 aa).

The 145-residue stretch at 3–147 folds into the Globin domain; sequence NFTAEDKAAI…VASALGSRYH (145 aa). Heme b contacts are provided by His64 and His93.

The protein belongs to the globin family. In terms of assembly, heterotetramer of two alpha chains and two gamma chains in fetal hemoglobin (Hb F). Red blood cells.

Gamma chains make up the fetal hemoglobin F, in combination with alpha chains. This chain is Hemoglobin subunit gamma (HBG), found in Aotus azarae (Azara's night monkey).